Consider the following 204-residue polypeptide: FMN-dependent NADH:quinone oxidoreductase 1 (204 aa).

Residues serine 10 and serine 15–serine 17 contribute to the FMN site.

Belongs to the azoreductase type 1 family. As to quaternary structure, homodimer. The cofactor is FMN.

The enzyme catalyses 2 a quinone + NADH + H(+) = 2 a 1,4-benzosemiquinone + NAD(+). The catalysed reaction is N,N-dimethyl-1,4-phenylenediamine + anthranilate + 2 NAD(+) = 2-(4-dimethylaminophenyl)diazenylbenzoate + 2 NADH + 2 H(+). In terms of biological role, quinone reductase that provides resistance to thiol-specific stress caused by electrophilic quinones. Functionally, also exhibits azoreductase activity. Catalyzes the reductive cleavage of the azo bond in aromatic azo compounds to the corresponding amines. The polypeptide is FMN-dependent NADH:quinone oxidoreductase 1 (Rhizobium etli (strain ATCC 51251 / DSM 11541 / JCM 21823 / NBRC 15573 / CFN 42)).